The primary structure comprises 105 residues: Met repressor (105 aa).

It belongs to the MetJ family. In terms of assembly, homodimer.

Its subcellular location is the cytoplasm. In terms of biological role, this regulatory protein, when combined with SAM (S-adenosylmethionine) represses the expression of the methionine regulon and of enzymes involved in SAM synthesis. This is Met repressor from Photorhabdus laumondii subsp. laumondii (strain DSM 15139 / CIP 105565 / TT01) (Photorhabdus luminescens subsp. laumondii).